We begin with the raw amino-acid sequence, 320 residues long: Foldase protein PrsA (320 aa).

The signal sequence occupies residues 1–20; sequence MKMINKLIVPVTASALLLGA. The N-palmitoyl cysteine moiety is linked to residue Cys21. Residue Cys21 is the site of S-diacylglycerol cysteine attachment. A PpiC domain is found at 139 to 245; the sequence is EDSKKASHIL…FGYHIIKADK (107 aa). Residues 159–198 form a disordered region; the sequence is EGLDDKEAKQKAEEIQKEVSKDPSKFGEIAKKESMDTGSA.

It belongs to the PrsA family.

It is found in the cell membrane. The catalysed reaction is [protein]-peptidylproline (omega=180) = [protein]-peptidylproline (omega=0). In terms of biological role, plays a major role in protein secretion by helping the post-translocational extracellular folding of several secreted proteins. In Staphylococcus aureus (strain MRSA252), this protein is Foldase protein PrsA.